Here is a 447-residue protein sequence, read N- to C-terminus: Innexin-5 (447 aa).

4 helical membrane passes run 30 to 47 (TSTLLGFSAIMMAASQYV), 108 to 128 (QWIPIVLVLQAFLFYLPSIIW), 198 to 218 (ALYLLVKILYLANIVLQFWIL), and 283 to 303 (VYVFFWFWLLFVGLLTVCSLA). Positions 389–447 (KKDDDSALPASAPVDLQEDDDDDTPFPPPTKAVAETLTSDDEEEETDVDSPDTTATLPR) are disordered. Residues 426 to 438 (TSDDEEEETDVDS) show a composition bias toward acidic residues.

The protein belongs to the pannexin family.

The protein localises to the cell membrane. The protein resides in the cell junction. It localises to the gap junction. Structural component of the gap junctions. This Caenorhabditis elegans protein is Innexin-5 (inx-5).